The primary structure comprises 248 residues: Ureidoacrylate amidohydrolase RutB (248 aa).

Aspartate 41 functions as the Proton acceptor in the catalytic mechanism. Residue lysine 150 is part of the active site. Cysteine 183 acts as the Nucleophile in catalysis.

The protein belongs to the isochorismatase family. RutB subfamily.

The enzyme catalyses (Z)-3-ureidoacrylate + H2O + H(+) = (Z)-3-aminoacrylate + NH4(+) + CO2. It catalyses the reaction (Z)-3-ureidoacrylate + H2O = (Z)-3-aminoacrylate + carbamate + H(+). The catalysed reaction is (Z)-2-methylureidoacrylate + H2O + H(+) = (Z)-2-methylaminoacrylate + NH4(+) + CO2. In terms of biological role, hydrolyzes ureidoacrylate to form aminoacrylate and carbamate. The carbamate hydrolyzes spontaneously, thereby releasing one of the nitrogen atoms of the pyrimidine ring as ammonia and one of its carbon atoms as CO2. This is Ureidoacrylate amidohydrolase RutB from Stutzerimonas stutzeri (strain A1501) (Pseudomonas stutzeri).